Here is a 200-residue protein sequence, read N- to C-terminus: Dephospho-CoA kinase (200 aa).

The 199-residue stretch at 2–200 (LIAVVGKAGV…CHHGHYQTPK (199 aa)) folds into the DPCK domain. Residue 10-15 (GVGKTT) participates in ATP binding.

This sequence belongs to the CoaE family.

It is found in the cytoplasm. It carries out the reaction 3'-dephospho-CoA + ATP = ADP + CoA + H(+). It functions in the pathway cofactor biosynthesis; coenzyme A biosynthesis; CoA from (R)-pantothenate: step 5/5. Functionally, catalyzes the phosphorylation of the 3'-hydroxyl group of dephosphocoenzyme A to form coenzyme A. This chain is Dephospho-CoA kinase, found in Mycoplasma pneumoniae (strain ATCC 29342 / M129 / Subtype 1) (Mycoplasmoides pneumoniae).